A 112-amino-acid chain; its full sequence is uncharacterized protein (112 aa).

3 consecutive transmembrane segments (helical) span residues 33–53 (PSPL…PFGA), 58–78 (LYIY…NVCT), and 91–111 (CVYV…LLFV).

It localises to the membrane. This is an uncharacterized protein from Saccharomyces cerevisiae (strain ATCC 204508 / S288c) (Baker's yeast).